Here is a 105-residue protein sequence, read N- to C-terminus: Heat shock protein HspQ (105 aa).

Belongs to the HspQ family.

The protein localises to the cytoplasm. Its function is as follows. Involved in the degradation of certain denaturated proteins, including DnaA, during heat shock stress. The sequence is that of Heat shock protein HspQ from Salmonella choleraesuis (strain SC-B67).